The following is a 501-amino-acid chain: Melianol synthase CYP71BQ5 (501 aa).

A helical membrane pass occupies residues 1-21 (MEFRLPVLLSFLLFFLMLVRH). Position 439 (Cys-439) interacts with heme.

Belongs to the cytochrome P450 family. The cofactor is heme. As to expression, mainly expressed in petioles and roots, and, to a lower extent, in leaves.

It localises to the membrane. It carries out the reaction dihydroniloticin + 2 reduced [NADPH--hemoprotein reductase] + 2 O2 = melianol + 2 oxidized [NADPH--hemoprotein reductase] + 3 H2O + 2 H(+). Its pathway is secondary metabolite biosynthesis; terpenoid biosynthesis. Its function is as follows. Monooxygenase involved in the biosynthesis of limonoids triterpene natural products such as azadirachtin, an antifeedant widely used as bioinsecticide, and possessing many medicinal applications including anti-tumoral, anti-malarial, anti-rheumatic, antibacterial, anti-inflammatory, anti-pyretic and diuretic effects. Catalyzes the conversion of dihydroniloticin to the protolimonoid melianol. This chain is Melianol synthase CYP71BQ5, found in Melia azedarach (Chinaberry tree).